Here is a 145-residue protein sequence, read N- to C-terminus: S-adenosylmethionine synthase 2 (145 aa).

ATP-binding positions include 6-7, A23, K27, and K31; that span reads RK. L-methionine is bound at residue K31.

The protein belongs to the AdoMet synthase family. In terms of assembly, homotetramer. Mn(2+) serves as cofactor. Requires Mg(2+) as cofactor. It depends on Co(2+) as a cofactor. K(+) is required as a cofactor. In terms of tissue distribution, mainly in floral buds and roots.

It is found in the cytoplasm. The catalysed reaction is L-methionine + ATP + H2O = S-adenosyl-L-methionine + phosphate + diphosphate. The protein operates within amino-acid biosynthesis; S-adenosyl-L-methionine biosynthesis; S-adenosyl-L-methionine from L-methionine: step 1/1. Functionally, catalyzes the formation of S-adenosylmethionine from methionine and ATP. The reaction comprises two steps that are both catalyzed by the same enzyme: formation of S-adenosylmethionine (AdoMet) and triphosphate, and subsequent hydrolysis of the triphosphate. This chain is S-adenosylmethionine synthase 2 (SMS-2), found in Petroselinum crispum (Parsley).